Reading from the N-terminus, the 271-residue chain is ATP synthase subunit delta (271 aa).

The protein belongs to the ATPase delta chain family. In terms of assembly, F-type ATPases have 2 components, F(1) - the catalytic core - and F(0) - the membrane proton channel. F(1) has five subunits: alpha(3), beta(3), gamma(1), delta(1), epsilon(1). F(0) has three main subunits: a(1), b(2) and c(10-14). The alpha and beta chains form an alternating ring which encloses part of the gamma chain. F(1) is attached to F(0) by a central stalk formed by the gamma and epsilon chains, while a peripheral stalk is formed by the delta and b chains.

The protein localises to the cell membrane. F(1)F(0) ATP synthase produces ATP from ADP in the presence of a proton or sodium gradient. F-type ATPases consist of two structural domains, F(1) containing the extramembraneous catalytic core and F(0) containing the membrane proton channel, linked together by a central stalk and a peripheral stalk. During catalysis, ATP synthesis in the catalytic domain of F(1) is coupled via a rotary mechanism of the central stalk subunits to proton translocation. Functionally, this protein is part of the stalk that links CF(0) to CF(1). It either transmits conformational changes from CF(0) to CF(1) or is implicated in proton conduction. This chain is ATP synthase subunit delta, found in Renibacterium salmoninarum (strain ATCC 33209 / DSM 20767 / JCM 11484 / NBRC 15589 / NCIMB 2235).